Consider the following 358-residue polypeptide: Gap junction alpha-5 protein (358 aa).

Over 1 to 19 the chain is Cytoplasmic; it reads MGDWSFLGEFLEEVHKHST. The helical transmembrane segment at 20-40 threads the bilayer; the sequence is VIGKVWLTVLFIFRMLVLGTA. Topologically, residues 41-76 are extracellular; the sequence is AESSWGDEQADFRCDTIQPGCQNVCYDQAFPISHIR. Residues 77–97 traverse the membrane as a helical segment; the sequence is YWVLQIIFVSTPSLVYMGHAM. Topologically, residues 98–164 are cytoplasmic; that stretch reads HTVRMQEKQK…CTILIRTTME (67 aa). Residues 165–185 form a helical membrane-spanning segment; the sequence is VAFIVGQYLLYGIFLDTLHVC. At 186–205 the chain is on the extracellular side; the sequence is RRSPCPHPVNCYVSRPTEKN. Residues 206–226 form a helical membrane-spanning segment; it reads VFIVFMMAVAGLSLFLSLAEL. Residues 227 to 358 are Cytoplasmic-facing; the sequence is YHLGWKKIRQ…SKARSDDLSV (132 aa). Disordered stretches follow at residues 242-262 and 318-358; these read RQGV…QSLT and SQKP…DLSV. Phosphoserine is present on residues S353 and S357.

Belongs to the connexin family. Alpha-type (group II) subfamily. In terms of assembly, a connexon is composed of a hexamer of connexins. Abundantly expressed in the lung, also expressed in the kidney and heart.

It localises to the cell membrane. It is found in the cell junction. The protein resides in the gap junction. In terms of biological role, one gap junction consists of a cluster of closely packed pairs of transmembrane channels, the connexons, through which materials of low MW diffuse from one cell to a neighboring cell. The polypeptide is Gap junction alpha-5 protein (Gja5) (Mus musculus (Mouse)).